The chain runs to 196 residues: Indolepyruvate oxidoreductase subunit IorB (196 aa).

As to quaternary structure, heterodimer of the IorA and IorB subunits.

The catalysed reaction is indole-3-pyruvate + 2 oxidized [2Fe-2S]-[ferredoxin] + CoA = (indol-3-yl)acetyl-CoA + 2 reduced [2Fe-2S]-[ferredoxin] + CO2 + H(+). Catalyzes the ferredoxin-dependent oxidative decarboxylation of arylpyruvates. This chain is Indolepyruvate oxidoreductase subunit IorB (iorB), found in Methanothermobacter thermautotrophicus (strain ATCC 29096 / DSM 1053 / JCM 10044 / NBRC 100330 / Delta H) (Methanobacterium thermoautotrophicum).